Consider the following 101-residue polypeptide: Apolipoprotein C-II (101 aa).

Residues 1–22 form the signal peptide; that stretch reads MGTRFLLALFLVLLVLGFEVQG. The interval 66–74 is lipid binding; that stretch reads TVDEKLRDM. Residues 78–101 form a lipoprotein lipase cofactor region; sequence STAAMSTYAGILTDQVLSMLKGEE.

This sequence belongs to the apolipoprotein C2 family. Proapolipoprotein C-II is synthesized as a sialic acid containing glycoprotein which is subsequently desialylated prior to its proteolytic processing. In terms of processing, proapolipoprotein C-II, the major form found in plasma undergoes proteolytic cleavage of its N-terminal hexapeptide to generate apolipoprotein C-II, which occurs as the minor form in plasma.

The protein resides in the secreted. Its function is as follows. Component of chylomicrons, very low-density lipoproteins (VLDL), low-density lipoproteins (LDL), and high-density lipoproteins (HDL) in plasma. Plays an important role in lipoprotein metabolism as an activator of lipoprotein lipase. Both proapolipoprotein C-II and apolipoprotein C-II can activate lipoprotein lipase. The sequence is that of Apolipoprotein C-II (APOC2) from Aotus nancymaae (Ma's night monkey).